A 1764-amino-acid chain; its full sequence is Latent-transforming growth factor beta-binding protein 2 (1764 aa).

The N-terminal stretch at 1 to 35 is a signal peptide; it reads MRAPTTVRCSGRIQRARWRGFLPLVLALLMGTSHA. Residues 80–140 form a disordered region; it reads PGLSPSEWNQ…PPAARTAHSV (61 aa). The tract at residues 94–115 is heparin-binding; that stretch reads IPGRLAEAEARRPSRAQQLRRV. A compositionally biased stretch (polar residues) spans 108–128; the sequence is RAQQLRRVQSPVQTRRSNPRG. An N-linked (GlcNAc...) asparagine glycan is attached at Asn-175. The 33-residue stretch at 181-213 folds into the EGF-like 1 domain; it reads IKPVCQPPCQNRGSCSRPQLCICRSGFRGARCE. Intrachain disulfides connect Cys-185–Cys-195, Cys-189–Cys-201, and Cys-203–Cys-212. Residues 220–279 form a disordered region; the sequence is EFDPQNARPVPRRSVEGAPGPHRSSEARGSLVTRIQPLLPPLPPPPSRTLSQTRPLQQHA. Positions 226–243 are heparin-binding; it reads ARPVPRRSVEGAPGPHRS. Residues 257 to 266 are compositionally biased toward pro residues; that stretch reads LLPPLPPPPS. Asn-330 carries N-linked (GlcNAc...) asparagine glycosylation. 331-341 serves as a coordination point for heparin; sequence LTEKIKKIKVV. The EGF-like 2 domain occupies 383-415; sequence RIYFCQIPCLNGGRCIGRDECWCPANSTGKFCH. 3 disulfides stabilise this stretch: Cys-387/Cys-397, Cys-391/Cys-403, and Cys-405/Cys-414. Asn-408 carries an N-linked (GlcNAc...) asparagine glycan. A disordered region spans residues 484–529; that stretch reads EVDPVPEDNSVETRASHRPHGSSGHSHWASNSIPARAGEAPRPPPV. A Phosphoserine modification is found at Ser-493. The TB 1 domain occupies 538–590; that stretch reads GQCYLSTVNGQCANPLGELTSQEDCCGSVGTSWGVTSCAPCPPRPAFPVIENG. Disulfide bonds link Cys-540–Cys-562, Cys-549–Cys-575, and Cys-563–Cys-578. Asn-602 carries an N-linked (GlcNAc...) asparagine glycan. The EGF-like 3; calcium-binding domain occupies 608 to 648; the sequence is DINECLTLGLCKDSECVNTRGSYLCTCRPGLMLDPSRSRCV. Cystine bridges form between Cys-612–Cys-623, Cys-618–Cys-632, Cys-634–Cys-647, Cys-660–Cys-682, Cys-669–Cys-695, Cys-683–Cys-698, and Cys-684–Cys-710. The TB 2 domain occupies 658 to 710; it reads GLCYRSMVSGTCTLPLVQRITKQICCCSRVGKAWGSKCEHCPLPGTEAFREIC. Disordered stretches follow at residues 729–759 and 786–809; these read KAEE…RQPL and SAPH…LPGQ. Positions 834–876 constitute an EGF-like 4 domain; sequence GFDPCFAGASNICGPGTCVKLPNGYRCVCSPGYQLHPSQDYCT. Disulfide bonds link Cys-838/Cys-851, Cys-846/Cys-860, Cys-862/Cys-875, Cys-881/Cys-892, Cys-886/Cys-901, Cys-903/Cys-918, Cys-924/Cys-935, Cys-930/Cys-944, Cys-946/Cys-958, Cys-964/Cys-975, Cys-970/Cys-984, Cys-987/Cys-998, Cys-1004/Cys-1015, Cys-1010/Cys-1024, Cys-1026/Cys-1039, Cys-1045/Cys-1056, Cys-1051/Cys-1065, Cys-1068/Cys-1081, Cys-1087/Cys-1098, Cys-1093/Cys-1107, Cys-1110/Cys-1123, Cys-1129/Cys-1141, Cys-1136/Cys-1150, Cys-1152/Cys-1164, Cys-1170/Cys-1182, Cys-1176/Cys-1191, Cys-1193/Cys-1206, Cys-1212/Cys-1223, Cys-1218/Cys-1232, Cys-1234/Cys-1247, Cys-1253/Cys-1265, Cys-1259/Cys-1274, Cys-1276/Cys-1289, Cys-1295/Cys-1307, Cys-1302/Cys-1316, Cys-1318/Cys-1332, Cys-1359/Cys-1382, Cys-1369/Cys-1394, Cys-1383/Cys-1397, Cys-1435/Cys-1448, Cys-1443/Cys-1457, Cys-1459/Cys-1472, Cys-1478/Cys-1488, Cys-1483/Cys-1497, and Cys-1499/Cys-1512. The EGF-like 5; calcium-binding domain occupies 877 to 919; the sequence is DDNECLRNPCEGRGRCVNSVGSYSCLCYPGYTLATLGDTQECQ. The EGF-like 6; calcium-binding domain occupies 920–959; the sequence is DVDECEQPGVCSGGRCSNTEGSYHCECDQGYVMVRRGHCQ. Residues 960–999 enclose the EGF-like 7; calcium-binding domain; sequence DINECRHPGTCPDGRCVNSPGSYTCLACEEGYIGQSGNCV. The EGF-like 8; calcium-binding domain maps to 1000 to 1040; the sequence is DMNECLTPGICAHGRCINMEGSFRCSCEPGYELTPDKKGCR. The region spanning 1041 to 1082 is the EGF-like 9; calcium-binding domain; the sequence is DVDECASRASCPTGLCLNTEGSFTCSACQSGYWVNEDGTACE. Residues 1083-1124 form the EGF-like 10; calcium-binding domain; sequence DLDECAFPGVCPTGVCTNTVGSFSCKDCDRGFRPSPLGNSCE. Positions 1125–1165 constitute an EGF-like 11; calcium-binding domain; that stretch reads DVDECEGPQNSCLGGECKNTDGSYQCLCPQGFQLANGTVCE. N-linked (GlcNAc...) asparagine glycosylation is present at Asn-1160. The 42-residue stretch at 1166 to 1207 folds into the EGF-like 12; calcium-binding domain; that stretch reads DVDECVGEEHCAPHGECLNSPGSFFCLCAPGFASAEGGTRCQ. In terms of domain architecture, EGF-like 13; calcium-binding spans 1208–1248; it reads DVDECATTEPCLGGHCVNTEGSFNCLCETGFQPAPDSGECV. Residues 1249-1290 enclose the EGF-like 15; calcium-binding domain; it reads DIDECANDTVCGNHGFCDNTDGSFRCLCDQGFETSPSGWECV. Asn-1255 carries an N-linked (GlcNAc...) asparagine glycan. Positions 1291 to 1333 constitute an EGF-like 16; calcium-binding domain; it reads DVNECELMLAVCGDALCENVEGSFLCLCASDLEEYDAEEGHCR. The TB 3 domain maps to 1357-1409; sequence MECYAEHNGGPPCSQILGQNSTQAECCSTQGARWGETCDPCPSEDSVEFSELC. N-linked (GlcNAc...) asparagine glycosylation is present at Asn-1376. An EGF-like 17; calcium-binding domain is found at 1431–1473; that stretch reads DADECILFGPALCQNGRCLNTVPGYICLCNPGYHYDAVSRKCQ. Residues 1474–1513 enclose the EGF-like 18; calcium-binding domain; sequence DHNECQDLACENGECVNTEGSFHCFCSPPLILDLSGQRCV. A glycan (N-linked (GlcNAc...) asparagine) is linked at Asn-1514. The region spanning 1530–1582 is the TB 4 domain; that stretch reads DICWKKVTNDVCSQPLRGHHTTYTECCCQDGEAWSQQCALCPPRSSEVYAQLC. Cystine bridges form between Cys-1532–Cys-1555, Cys-1541–Cys-1567, Cys-1556–Cys-1570, Cys-1557–Cys-1582, Cys-1680–Cys-1691, Cys-1686–Cys-1700, Cys-1702–Cys-1715, Cys-1721–Cys-1736, Cys-1731–Cys-1745, and Cys-1747–Cys-1760. Residues 1585–1764 form a C-terminal domain region; that stretch reads ARIEAEREAG…PGPPHCAAKE (180 aa). The EGF-like 19; calcium-binding domain maps to 1676-1716; that stretch reads QAEECGILNGCENGRCVRVREGYTCDCFEGFQLDTALMACV. One can recognise an EGF-like 20; calcium-binding domain in the interval 1717 to 1761; sequence DVNECEDLNGAARLCAHGHCENTEGSYRCHCSPGYVAEPGPPHCA.

The protein belongs to the LTBP family. Forms part of the large latent transforming growth factor beta precursor complex; removal is essential for activation of complex. Interacts with SDC4. Interacts (via C-terminal domain) with FBN1 (via N-terminal domain) in a Ca(+2)-dependent manner. Post-translationally, N-Glycosylated. Contains hydroxylated asparagine residues. In terms of tissue distribution, expressed in cortical astrocytes and glioma cells. Expression is up-regulated by TGFB1.

The protein resides in the secreted. The protein localises to the extracellular space. Its subcellular location is the extracellular matrix. Functionally, may play an integral structural role in elastic-fiber architectural organization and/or assembly. The sequence is that of Latent-transforming growth factor beta-binding protein 2 (Ltbp2) from Rattus norvegicus (Rat).